The sequence spans 347 residues: UDP-N-acetylglucosamine--N-acetylmuramyl-(pentapeptide) pyrophosphoryl-undecaprenol N-acetylglucosamine transferase (347 aa).

Residues 11-13, asparagine 122, arginine 163, serine 189, and glutamine 279 each bind UDP-N-acetyl-alpha-D-glucosamine; that span reads TGG.

The protein belongs to the glycosyltransferase 28 family. MurG subfamily.

The protein resides in the cell inner membrane. It catalyses the reaction di-trans,octa-cis-undecaprenyl diphospho-N-acetyl-alpha-D-muramoyl-L-alanyl-D-glutamyl-meso-2,6-diaminopimeloyl-D-alanyl-D-alanine + UDP-N-acetyl-alpha-D-glucosamine = di-trans,octa-cis-undecaprenyl diphospho-[N-acetyl-alpha-D-glucosaminyl-(1-&gt;4)]-N-acetyl-alpha-D-muramoyl-L-alanyl-D-glutamyl-meso-2,6-diaminopimeloyl-D-alanyl-D-alanine + UDP + H(+). Its pathway is cell wall biogenesis; peptidoglycan biosynthesis. Its function is as follows. Cell wall formation. Catalyzes the transfer of a GlcNAc subunit on undecaprenyl-pyrophosphoryl-MurNAc-pentapeptide (lipid intermediate I) to form undecaprenyl-pyrophosphoryl-MurNAc-(pentapeptide)GlcNAc (lipid intermediate II). This chain is UDP-N-acetylglucosamine--N-acetylmuramyl-(pentapeptide) pyrophosphoryl-undecaprenol N-acetylglucosamine transferase, found in Sulfurihydrogenibium sp. (strain YO3AOP1).